Here is a 623-residue protein sequence, read N- to C-terminus: Chaperone protein DnaK (623 aa).

A Phosphothreonine; by autocatalysis modification is found at Thr-175. The tract at residues 580 to 623 (PEGAQGAGFDPNNMGGANAGNASAENDKKDDNVVDADYKVEDDK) is disordered. The span at 591–603 (NNMGGANAGNASA) shows a compositional bias: low complexity. Residues 604-623 (ENDKKDDNVVDADYKVEDDK) show a composition bias toward basic and acidic residues.

Belongs to the heat shock protein 70 family.

Functionally, acts as a chaperone. This Clostridium botulinum (strain Okra / Type B1) protein is Chaperone protein DnaK.